The chain runs to 567 residues: Structural protein ORF567 (567 aa).

The segment at 7–393 (INALLGFPEE…MPIEHKPEQQ (387 aa)) is disordered. Over residues 65-79 (TPTPIRPAPPPPPPI) the composition is skewed to pro residues. The segment covering 180–200 (PKREPEHHTHGSTNNEHESKR) has biased composition (basic and acidic residues). Positions 219-231 (THQTSPSHSSGGT) are enriched in low complexity. Pro residues-rich tracts occupy residues 253–278 (MPIPPNPPIVREPTPTPQPTPIPTPP) and 285–299 (TPTPPRTPQPTPPPT). The segment covering 300–312 (HGSSSTNSSGSTN) has biased composition (low complexity). Positions 319-335 (PKPIPIPPTPPPPPPHH) are enriched in pro residues. Basic and acidic residues predominate over residues 343-353 (PKHESEHHDHG). Low complexity predominate over residues 354 to 372 (SSSTNSSSSTSNSSSGGTN).

The protein localises to the virion. The sequence is that of Structural protein ORF567 from Acidianus two-tailed virus (ATV).